Reading from the N-terminus, the 480-residue chain is tRNA-2-methylthio-N(6)-dimethylallyladenosine synthase (480 aa).

One can recognise an MTTase N-terminal domain in the interval 43–161 (KLYCLNTFGC…FPELLYSAMD (119 aa)). C52, C88, C122, C198, C202, and C205 together coordinate [4Fe-4S] cluster. The Radical SAM core domain occupies 184–414 (RKDGVKAWVT…LETQNRISKE (231 aa)). One can recognise a TRAM domain in the interval 417–480 (DTFLGKVVEV…TWSLEGSIVR (64 aa)).

Belongs to the methylthiotransferase family. MiaB subfamily. As to quaternary structure, monomer. Requires [4Fe-4S] cluster as cofactor.

The protein localises to the cytoplasm. The enzyme catalyses N(6)-dimethylallyladenosine(37) in tRNA + (sulfur carrier)-SH + AH2 + 2 S-adenosyl-L-methionine = 2-methylsulfanyl-N(6)-dimethylallyladenosine(37) in tRNA + (sulfur carrier)-H + 5'-deoxyadenosine + L-methionine + A + S-adenosyl-L-homocysteine + 2 H(+). Functionally, catalyzes the methylthiolation of N6-(dimethylallyl)adenosine (i(6)A), leading to the formation of 2-methylthio-N6-(dimethylallyl)adenosine (ms(2)i(6)A) at position 37 in tRNAs that read codons beginning with uridine. This is tRNA-2-methylthio-N(6)-dimethylallyladenosine synthase from Acetivibrio thermocellus (strain ATCC 27405 / DSM 1237 / JCM 9322 / NBRC 103400 / NCIMB 10682 / NRRL B-4536 / VPI 7372) (Clostridium thermocellum).